A 129-amino-acid polypeptide reads, in one-letter code: Small ribosomal subunit protein uS11 (129 aa).

Belongs to the universal ribosomal protein uS11 family. In terms of assembly, part of the 30S ribosomal subunit. Interacts with proteins S7 and S18. Binds to IF-3.

Located on the platform of the 30S subunit, it bridges several disparate RNA helices of the 16S rRNA. Forms part of the Shine-Dalgarno cleft in the 70S ribosome. The chain is Small ribosomal subunit protein uS11 from Psychromonas ingrahamii (strain DSM 17664 / CCUG 51855 / 37).